A 274-amino-acid polypeptide reads, in one-letter code: Carbonic anhydrase (274 aa).

Cysteine 39, histidine 98, and cysteine 101 together coordinate Zn(2+). The tract at residues 214 to 274 (EDEYAPHPNS…QAERIYRGSR (61 aa)) is disordered. Basic and acidic residues-rich tracts occupy residues 234–245 (PGKERPGREKAT) and 261–274 (LPREQAERIYRGSR).

This sequence belongs to the beta-class carbonic anhydrase family. As to quaternary structure, a hexamer formed by a trimer of dimers. Interacts with the first 260 residues of CcmM; both the N-terminal 206 residues and the C-terminal tail contribute to CcmM binding. Interacts with full-length and the N-terminal 249 residues of CcmM. A probable CcmM-CcaA-CcmN complex as well as a CcaA-RuBisCO-CcmM complex can also be isolated. The cofactor is Zn(2+).

Its subcellular location is the carboxysome. It catalyses the reaction hydrogencarbonate + H(+) = CO2 + H2O. Its activity is regulated as follows. Inhibited by ethoxyzolamide. Reversible hydration of carbon dioxide. Essential to photosynthetic carbon dioxide fixation, supplies CO(2) to RuBisCO (ribulose bisphosphate carboxylase, rbcL-rbcS) in the carboxysome. This Synechocystis sp. (strain ATCC 27184 / PCC 6803 / Kazusa) protein is Carbonic anhydrase.